A 593-amino-acid chain; its full sequence is FAD-binding monooxygenase acrE (593 aa).

Residues threonine 61–phenylalanine 64, aspartate 73–serine 74, and tyrosine 79 each bind FAD. Residue arginine 71 to aspartate 73 coordinates NADP(+). NADP(+) is bound by residues threonine 200–glutamine 206 and arginine 223–serine 224.

The protein belongs to the FAD-binding monooxygenase family. FAD is required as a cofactor.

Its pathway is secondary metabolite biosynthesis. In terms of biological role, FAD-binding monooxygenase; part of the cluster that mediates the biosynthesis of acurin A, a highly reduced polyketide coupled to a serine via a peptide bond. The activities of the highly reducing polyketide synthase acrA and the nonribosomal peptide synthetase acrB are collectively responsible for the synthesis of the acurin A core structure with a heptaketide backbone produced by acrA covalently fused to a L-serine by acrB. After the formation of the PK-NRP hybrid product, it is detached from acrB by reductive release to set up the formation of the lactam ring by aldol condensation. The hydrolyase acrC then catalyzes water loss to generate a double bond in the ring. This double bond is probably reduced, which is followed by three oxidations at C-22 to generate the carboxylic acid moiety, involving probably the FAD-binding monooxygenase acrE and the cytochrome P450 monooxygenases acrD and acrF. Finally, a last methylation step performed by the O-methyltransferase acrG leads to the production of acurin A. The sequence is that of FAD-binding monooxygenase acrE from Aspergillus aculeatus (strain ATCC 16872 / CBS 172.66 / WB 5094).